A 355-amino-acid chain; its full sequence is Alanine racemase (355 aa).

Lys34 serves as the catalytic Proton acceptor; specific for D-alanine. At Lys34 the chain carries N6-(pyridoxal phosphate)lysine. Arg133 provides a ligand contact to substrate. The Proton acceptor; specific for L-alanine role is filled by Tyr249. Met297 serves as a coordination point for substrate.

This sequence belongs to the alanine racemase family. Pyridoxal 5'-phosphate is required as a cofactor.

The enzyme catalyses L-alanine = D-alanine. The protein operates within amino-acid biosynthesis; D-alanine biosynthesis; D-alanine from L-alanine: step 1/1. Its function is as follows. Catalyzes the interconversion of L-alanine and D-alanine. May also act on other amino acids. This is Alanine racemase (alr) from Rickettsia rickettsii (strain Sheila Smith).